A 157-amino-acid chain; its full sequence is Cyclic pyranopterin monophosphate synthase (157 aa).

Substrate-binding positions include 74-76 (MCH) and 112-113 (ME). Asp127 is a catalytic residue.

It belongs to the MoaC family. As to quaternary structure, homohexamer; trimer of dimers.

It carries out the reaction (8S)-3',8-cyclo-7,8-dihydroguanosine 5'-triphosphate = cyclic pyranopterin phosphate + diphosphate. The protein operates within cofactor biosynthesis; molybdopterin biosynthesis. In terms of biological role, catalyzes the conversion of (8S)-3',8-cyclo-7,8-dihydroguanosine 5'-triphosphate to cyclic pyranopterin monophosphate (cPMP). The sequence is that of Cyclic pyranopterin monophosphate synthase from Sulfurovum sp. (strain NBC37-1).